We begin with the raw amino-acid sequence, 512 residues long: MVSHPMEKAANGASALETQTGELDQPERLRKIISVSSIAAGVQFGWALQLSLLTPYVQLLGIPHKWASLIWLCGPISGMLVQPIVGYHSDRCTSRFGRRRPFIVAGAGLVTVAVFLIGYAADIGHSMGDQLDKPPKTRAIAIFALGFWILDVANNTLQGPCRAFLADLSAGNAKKTRTANAFFSFFMAVGNVLGYAAGSYRNLYKVVPFTMTESCDLYCANLKTCFFLSITLLLIVTFVSLCYVKEKPWTPEPTADGKASNVPFFGEIFGAFKELKRPMWMLLIVTALNWIAWFPFLLFDTDWMGREVYGGNSDATATAASKKLYNDGVRAGALGLMLNAIVLGFMSLGVEWIGRKLGGAKRLWGIVNFILAICLAMTVVVTKQAENHRRDHGGAKTGPPGNVTAGALTLFAILGIPQAITFSIPFALASIFSTNSGAGQGLSLGVLNLAIVVPQMVISVGGGPFDELFGGGNIPAFVLGAIAAAVSGVLALTVLPSPPPDAPAFKATMGFH.

The Cytoplasmic segment spans residues 1 to 31 (MVSHPMEKAANGASALETQTGELDQPERLRK). A helical membrane pass occupies residues 32–52 (IISVSSIAAGVQFGWALQLSL). Residues 53 to 65 (LTPYVQLLGIPHK) lie on the Extracellular side of the membrane. The helical transmembrane segment at 66–86 (WASLIWLCGPISGMLVQPIVG) threads the bilayer. Topologically, residues 87-100 (YHSDRCTSRFGRRR) are cytoplasmic. The helical transmembrane segment at 101 to 121 (PFIVAGAGLVTVAVFLIGYAA) threads the bilayer. At 122 to 138 (DIGHSMGDQLDKPPKTR) the chain is on the extracellular side. The helical transmembrane segment at 139–159 (AIAIFALGFWILDVANNTLQG) threads the bilayer. The Cytoplasmic portion of the chain corresponds to 160 to 177 (PCRAFLADLSAGNAKKTR). The chain crosses the membrane as a helical span at residues 178–198 (TANAFFSFFMAVGNVLGYAAG). Over 199–223 (SYRNLYKVVPFTMTESCDLYCANLK) the chain is Extracellular. Residues 224–244 (TCFFLSITLLLIVTFVSLCYV) traverse the membrane as a helical segment. Residues 245 to 278 (KEKPWTPEPTADGKASNVPFFGEIFGAFKELKRP) lie on the Cytoplasmic side of the membrane. A helical membrane pass occupies residues 279 to 299 (MWMLLIVTALNWIAWFPFLLF). At 300-332 (DTDWMGREVYGGNSDATATAASKKLYNDGVRAG) the chain is on the extracellular side. The chain crosses the membrane as a helical span at residues 333 to 353 (ALGLMLNAIVLGFMSLGVEWI). Residues 354-362 (GRKLGGAKR) lie on the Cytoplasmic side of the membrane. Residues 363–383 (LWGIVNFILAICLAMTVVVTK) traverse the membrane as a helical segment. At 384 to 407 (QAENHRRDHGGAKTGPPGNVTAGA) the chain is on the extracellular side. N-linked (GlcNAc...) asparagine glycosylation is present at asparagine 402. A helical membrane pass occupies residues 408-428 (LTLFAILGIPQAITFSIPFAL). Topologically, residues 429 to 440 (ASIFSTNSGAGQ) are cytoplasmic. Residues 441–461 (GLSLGVLNLAIVVPQMVISVG) form a helical membrane-spanning segment. The Extracellular portion of the chain corresponds to 462–473 (GGPFDELFGGGN). Residues 474–494 (IPAFVLGAIAAAVSGVLALTV) form a helical membrane-spanning segment. Residues 495 to 512 (LPSPPPDAPAFKATMGFH) are Cytoplasmic-facing.

Belongs to the glycoside-pentoside-hexuronide (GPH) cation symporter transporter (TC 2.A.2.4) family. Homodimer. Interacts with SUC3 and SUC4. Expressed in leaves and, to a lower extent, in roots, flowers and stems. Highly specific to the phloem, exclusively localized in companion cells (at protein level).

The protein resides in the cell membrane. It catalyses the reaction sucrose(out) + H(+)(out) = sucrose(in) + H(+)(in). Its pathway is glycan biosynthesis; sucrose metabolism. With respect to regulation, inhibited by protonophores (e.g. dinitrophenol and carbonyl cyanide m-chlorophenyl-hydrazone (CCCP)) and SH group inhibitors (e.g. N-ethylmaleimide (NEM) and p-chloromercuriphenyl sulphonic acid (PCMPS)). Its function is as follows. Responsible for the transport of sucrose into the cell, with the concomitant uptake of protons (symport system). Can also transport other glucosides such as maltose, arbutin (hydroquinone-beta-D-glucoside), salicin (2-(hydroxymethyl)phenyl-beta-D-glucoside), alpha-phenylglucoside, beta-phenylglucoside, alpha-paranitrophenylglucoside, beta-paranitrophenylglucoside, and paranitrophenyl-beta-thioglucoside. May also transport biotin. Required for apoplastic phloem sucrose loading in source tissues (e.g. leaves) in order to transport it to sink tissues (e.g. roots, flowers). In Arabidopsis thaliana (Mouse-ear cress), this protein is Sucrose transport protein SUC2.